Consider the following 318-residue polypeptide: MAPESLAEVPGCNCFWYLGVVAATWWGLRAAWCLLNGARVWVLGSGAQVGPTIGKWAVVTGATDGIGKAYAEELARRGMNIVLISRSPEKLEEAAIHIKQKFKVETKIIAADFGKPTEIYERIEAGLRDLEIGVLVNNVGISYEYPEYFLEIPDLENTLDKMININIMSVCQMTRLVLPGMLGRGKGVVLNISSASGMYPVPLLTVYSATKAFVDFFSRGLHAEYRSKGVTVQSVLPFFVATKLAKIRKPTWDKPSPETYVRSALNTVGLQTQTNGYLPHAITGWISTSLVPVSAAISMGMKMNKGLRARFLKKAKQN.

Residues 15–35 (FWYLGVVAATWWGLRAAWCLL) traverse the membrane as a helical segment. 54–83 (GKWAVVTGATDGIGKAYAEELARRGMNIVL) contacts NADP(+). Helical transmembrane passes span 187-207 (GVVL…LTVY) and 281-301 (AITG…SMGM). Ser-194 provides a ligand contact to substrate. The active-site Proton acceptor is Tyr-207.

Belongs to the short-chain dehydrogenases/reductases (SDR) family. 17-beta-HSD 3 subfamily.

The protein resides in the endoplasmic reticulum membrane. It catalyses the reaction a very-long-chain (3R)-3-hydroxyacyl-CoA + NADP(+) = a very-long-chain 3-oxoacyl-CoA + NADPH + H(+). The enzyme catalyses 17beta-estradiol + NAD(+) = estrone + NADH + H(+). The catalysed reaction is 17beta-estradiol + NADP(+) = estrone + NADPH + H(+). Its pathway is lipid metabolism; fatty acid biosynthesis. It functions in the pathway steroid biosynthesis; estrogen biosynthesis. Catalyzes the second of the four reactions of the long-chain fatty acids elongation cycle. This endoplasmic reticulum-bound enzymatic process, allows the addition of two carbons to the chain of long- and very long-chain fatty acids/VLCFAs per cycle. This enzyme has a 3-ketoacyl-CoA reductase activity, reducing 3-ketoacyl-CoA to 3-hydroxyacyl-CoA, within each cycle of fatty acid elongation. Thereby, it may participate in the production of VLCFAs of different chain lengths that are involved in multiple biological processes as precursors of membrane lipids and lipid mediators. May also catalyze the transformation of estrone (E1) into estradiol (E2) and play a role in estrogen formation. The chain is Very-long-chain 3-oxoacyl-CoA reductase-B (hsd17b12-b) from Xenopus laevis (African clawed frog).